We begin with the raw amino-acid sequence, 241 residues long: MQCFKFIKVMMILFNLLIFLCGAALLAVGIWVSVDGTSFLKAFGSLSSSAMQFVNVGYFLIAAGAVLFILGFLGCYGAHSENKCVLMMFFSILLIIFIAEIAGAVVALVYTTMAEQFLTFLVVPAIEKDYGYQTEFTQVWNSTMEGLHCCGFNNYTDFNSSRFVKENKVFPPFCCANNTDSHTVEPCTEDKAKSMNVQGCFKQILQKIRTNAVTVGGVAVGVAALELAAMVVSMYLYCNLK.

3 helical membrane-spanning segments follow: residues 12–32 (ILFNLLIFLCGAALLAVGIWV), 53–73 (FVNVGYFLIAAGAVLFILGFL), and 89–109 (FFSILLIIFIAEIAGAVVALV). Asn-154 carries an N-linked (GlcNAc...) asparagine glycan. Residues 212 to 232 (AVTVGGVAVGVAALELAAMVV) form a helical membrane-spanning segment.

Belongs to the tetraspanin (TM4SF) family. As to quaternary structure, interacts with SLC19A2. Interacts with NTRK1/TRKA.

The protein resides in the cell membrane. Its subcellular location is the lysosome membrane. In terms of biological role, structural component of specialized membrane microdomains known as tetraspanin-enriched microdomains (TERMs), which act as platforms for receptor clustering and signaling. Participates thereby in diverse biological functions such as cell signal transduction, adhesion, migration and protein trafficking. Regulates neuronal differentiation in response to NGF by facilitating NGF-mediated activation of NTRK1/TRKA receptor tyrosine kinase and subsequent downstream signaling pathways. Plays a role in the inhibition of TNFalpha-induced apoptosis. Mechanistically, inhibits the NF-kappa-B signaling pathway by blocking phosphorylation of CHUK. Also promotes the stability of the thiamine transporter 1/SLC19A2 in intestinal epithelial cells leading to an increase of thiamine uptake process. This chain is Tetraspanin-1 (Tspan1), found in Rattus norvegicus (Rat).